The following is a 338-amino-acid chain: Anthranilate phosphoribosyltransferase (338 aa).

5-phospho-alpha-D-ribose 1-diphosphate-binding positions include Gly83, 86-87 (GD), Ser91, 93-96 (NCST), 111-119 (KHGNRAVSS), and Ala123. Gly83 is an anthranilate binding site. Residue Ser95 coordinates Mg(2+). Asn114 contributes to the anthranilate binding site. Residue Arg169 coordinates anthranilate. 2 residues coordinate Mg(2+): Asp228 and Glu229.

This sequence belongs to the anthranilate phosphoribosyltransferase family. Homodimer. Requires Mg(2+) as cofactor.

The catalysed reaction is N-(5-phospho-beta-D-ribosyl)anthranilate + diphosphate = 5-phospho-alpha-D-ribose 1-diphosphate + anthranilate. It participates in amino-acid biosynthesis; L-tryptophan biosynthesis; L-tryptophan from chorismate: step 2/5. Catalyzes the transfer of the phosphoribosyl group of 5-phosphorylribose-1-pyrophosphate (PRPP) to anthranilate to yield N-(5'-phosphoribosyl)-anthranilate (PRA). In Nitratidesulfovibrio vulgaris (strain DSM 19637 / Miyazaki F) (Desulfovibrio vulgaris), this protein is Anthranilate phosphoribosyltransferase.